A 688-amino-acid chain; its full sequence is DNA ligase (688 aa).

NAD(+) is bound by residues 38 to 42 (DEEYD), 87 to 88 (SL), and glutamate 118. Lysine 120 acts as the N6-AMP-lysine intermediate in catalysis. NAD(+)-binding residues include arginine 141, glutamate 175, lysine 291, and lysine 315. Zn(2+) contacts are provided by cysteine 409, cysteine 412, cysteine 428, and cysteine 433. Positions 590-679 (MKLDILKGLT…AELKGYNFDE (90 aa)) constitute a BRCT domain.

This sequence belongs to the NAD-dependent DNA ligase family. LigA subfamily. Mg(2+) serves as cofactor. It depends on Mn(2+) as a cofactor.

The catalysed reaction is NAD(+) + (deoxyribonucleotide)n-3'-hydroxyl + 5'-phospho-(deoxyribonucleotide)m = (deoxyribonucleotide)n+m + AMP + beta-nicotinamide D-nucleotide.. Its function is as follows. DNA ligase that catalyzes the formation of phosphodiester linkages between 5'-phosphoryl and 3'-hydroxyl groups in double-stranded DNA using NAD as a coenzyme and as the energy source for the reaction. It is essential for DNA replication and repair of damaged DNA. In Thermotoga petrophila (strain ATCC BAA-488 / DSM 13995 / JCM 10881 / RKU-1), this protein is DNA ligase.